A 191-amino-acid chain; its full sequence is Cell division protein SepF (191 aa).

Residues 156-167 (EEASPSNMSNKG) show a composition bias toward polar residues. The interval 156-191 (EEASPSNMSNKGNDLISKETSPAPEPAWGETVATAL) is disordered.

It belongs to the SepF family. In terms of assembly, homodimer. Interacts with FtsZ.

The protein resides in the cytoplasm. Its function is as follows. Cell division protein that is part of the divisome complex and is recruited early to the Z-ring. Probably stimulates Z-ring formation, perhaps through the cross-linking of FtsZ protofilaments. Its function overlaps with FtsA. This Prochlorococcus marinus (strain NATL1A) protein is Cell division protein SepF.